A 349-amino-acid chain; its full sequence is UDP-3-O-acylglucosamine N-acyltransferase 1 (349 aa).

The active-site Proton acceptor is histidine 241.

Belongs to the transferase hexapeptide repeat family. LpxD subfamily. As to quaternary structure, homotrimer.

It carries out the reaction a UDP-3-O-[(3R)-3-hydroxyacyl]-alpha-D-glucosamine + a (3R)-hydroxyacyl-[ACP] = a UDP-2-N,3-O-bis[(3R)-3-hydroxyacyl]-alpha-D-glucosamine + holo-[ACP] + H(+). It functions in the pathway bacterial outer membrane biogenesis; LPS lipid A biosynthesis. Catalyzes the N-acylation of UDP-3-O-acylglucosamine using 3-hydroxyacyl-ACP as the acyl donor. Is involved in the biosynthesis of lipid A, a phosphorylated glycolipid that anchors the lipopolysaccharide to the outer membrane of the cell. This Gloeobacter violaceus (strain ATCC 29082 / PCC 7421) protein is UDP-3-O-acylglucosamine N-acyltransferase 1.